The primary structure comprises 964 residues: Coatomer subunit beta (964 aa).

HEAT repeat units lie at residues 129–166 (ELLEPLMPAIRACLDHRHSYVRRNAVLAIFTIYKNFDW), 238–275 (AERSRFIRCIYNLLNSSSNAVRYESAGTLITLSLAPTA), 314–351 (KVMQDLVMDVLRVLAAPDIEVRRKTLALALDLVYSRNI), 393–430 (DVAANVIPVLVEFLSDTNELAAADVLIFIREAIQKFPA), and 466–506 (SQIL…QQGS). Positions 490-501 (RRLAGDQTEEQK) are enriched in basic and acidic residues. Positions 490 to 530 (RRLAGDQTEEQKQQQGSAGGNAAGSAAEGSGSGNASNKVTS) are disordered. Residues 512-526 (AGSAAEGSGSGNASN) show a composition bias toward low complexity.

In terms of assembly, oligomeric complex that consists of at least the alpha, beta, beta', gamma, delta, epsilon and zeta subunits. In terms of tissue distribution, during oogenesis and spermatogenesis, expressed in ovariole, germarium, testis tip and testis.

The protein localises to the cytoplasm. It localises to the golgi apparatus membrane. It is found in the cytoplasmic vesicle. The protein resides in the COPI-coated vesicle membrane. Functionally, the coatomer is a cytosolic protein complex that binds to dilysine motifs and reversibly associates with Golgi non-clathrin-coated vesicles, which further mediate biosynthetic protein transport from the ER, via the Golgi up to the trans Golgi network. Coatomer complex is required for budding from Golgi membranes, and is essential for the retrograde Golgi-to-ER transport of dilysine-tagged proteins. Required for limiting lipid storage in lipid droplets. The polypeptide is Coatomer subunit beta (Drosophila melanogaster (Fruit fly)).